The primary structure comprises 347 residues: 3-isopropylmalate dehydrogenase (347 aa).

Residues Arg94, Arg104, Arg128, and Asp219 each contribute to the substrate site. The Mg(2+) site is built by Asp219, Asp243, and Asp247. Residue 279 to 291 (GSAPDIAGQGKAD) coordinates NAD(+).

This sequence belongs to the isocitrate and isopropylmalate dehydrogenases family. LeuB type 2 subfamily. In terms of assembly, homodimer. Requires Mg(2+) as cofactor. It depends on Mn(2+) as a cofactor.

The protein localises to the cytoplasm. The enzyme catalyses (2R,3S)-3-isopropylmalate + NAD(+) = 4-methyl-2-oxopentanoate + CO2 + NADH. It participates in amino-acid biosynthesis; L-leucine biosynthesis; L-leucine from 3-methyl-2-oxobutanoate: step 3/4. Catalyzes the oxidation of 3-carboxy-2-hydroxy-4-methylpentanoate (3-isopropylmalate) to 3-carboxy-4-methyl-2-oxopentanoate. The product decarboxylates to 4-methyl-2 oxopentanoate. This Streptomyces avermitilis (strain ATCC 31267 / DSM 46492 / JCM 5070 / NBRC 14893 / NCIMB 12804 / NRRL 8165 / MA-4680) protein is 3-isopropylmalate dehydrogenase.